The chain runs to 222 residues: MSASVFIERRKIRPLRTEAACIPTHALCFNVLGIPYMDPGNGGIRPLNPDDSDATACVHGVAYLLTSDDLKKVILSEGGGIAYQVARLNAKLLLDDSPIVVDTLIGRHNVDASNERLPSARYIGVLTRGANELNLPLSYQRRLAEQPIYQPKSGWWFQLGVALFLWPWTRAAIITERLVYKHQGPDGHVPAWFLFIFDCLLWLMWAQHDYIHGPIFGRGDGR.

A run of 2 helical transmembrane segments spans residues 154 to 174 (GWWF…AAII) and 187 to 207 (GHVP…MWAQ).

The protein belongs to the class-I pyridoxal-phosphate-dependent aminotransferase family.

Its subcellular location is the membrane. The enzyme catalyses an alpha-(gamma-L-glutamyl)-L-amino acid = 5-oxo-L-proline + an L-alpha-amino acid. Its pathway is secondary metabolite biosynthesis. Gamma-glutamyl cyclotransferase; part of the gene cluster that mediates the biosynthesis of an unusual class of epipolythiodioxopiperazines (ETPs) lacking the reactive thiol group important for toxicity. Firstly, L-tyrosine is prenylated by tcpD, before undergoing condensation with L-glycine in a reaction catalyzed by the NRPS tcpP leading to the diketopiperazine (DKP) backbone. Afterwards the alpha-carbon of tyrosine is oxidized by the cytochrome P450 tcpC to form a hydroxyl group. However, in contrast other ETP biosynthesis pathways studied so far, tcpC is not able to bishydroxylate the DKP at both alpha-carbon positions, but hydroxylates the alpha-carbon of the tyrosine part and the nitrogen of the glycine part. The next steps involve an alpha,beta-elimination reaction catalyzed by tcpI, a methylation by the methyltransferase tcpN the action of the four enzyme cascade tcpG/K/J/I. Due to a dysfunctional cytochrome P450 monooxygenase tcpC, the pathway leads to the biosynthesis of probable non-toxic metabolites lacking the reactive thiol group. This is Gamma-glutamyl cyclotransferase gliK from Claviceps purpurea (strain 20.1) (Ergot fungus).